An 87-amino-acid chain; its full sequence is Protein Isd11 (87 aa).

Belongs to the complex I LYR family. As to quaternary structure, interacts with IscS; the interaction enhances cysteine desulfurase activity of IscS. Component of a complex, at least composed of IscS, Isd11 and IscU.

It localises to the mitochondrion. Its pathway is cofactor biosynthesis; iron-sulfur cluster biosynthesis. In terms of biological role, participates in iron-sulfur cluster formation (ISC) pathway for iron-sulfur (Fe-S) cluster biogenesis. Enhances cysteine desulfurase activity of IscS. The polypeptide is Protein Isd11 (Plasmodium falciparum (isolate 3D7)).